The primary structure comprises 287 residues: Pyridoxal kinase PdxY (287 aa).

Residues Ser-10 and 45–46 (TQ) each bind substrate. Residues Asp-112, Ala-144, Glu-149, Lys-182, and 209–212 (RPLV) each bind ATP. A substrate-binding site is contributed by Asp-224.

Belongs to the pyridoxine kinase family. PdxY subfamily. In terms of assembly, homodimer. It depends on Mg(2+) as a cofactor.

It carries out the reaction pyridoxal + ATP = pyridoxal 5'-phosphate + ADP + H(+). The protein operates within cofactor metabolism; pyridoxal 5'-phosphate salvage; pyridoxal 5'-phosphate from pyridoxal: step 1/1. Functionally, pyridoxal kinase involved in the salvage pathway of pyridoxal 5'-phosphate (PLP). Catalyzes the phosphorylation of pyridoxal to PLP. The protein is Pyridoxal kinase PdxY of Escherichia coli (strain UTI89 / UPEC).